A 114-amino-acid chain; its full sequence is MRFLNNKHRAKGLKAEEEACEFLKTLGFEMVERNFFSKFGEIDIIALKKGVLHFIEVKSGENFDPIYAITPSKLKKMIKTIRCYLSQKDPNSDFCIDALIVKNGKFELLENITF.

The protein belongs to the UPF0102 family.

This chain is UPF0102 protein HPAG1_0809, found in Helicobacter pylori (strain HPAG1).